Here is a 413-residue protein sequence, read N- to C-terminus: Aspartate aminotransferase, cytoplasmic (413 aa).

Residues glycine 39 and tryptophan 141 each contribute to the L-aspartate site. Serine 149 carries the post-translational modification Phosphoserine. Residue asparagine 195 participates in L-aspartate binding. Lysine 259 bears the N6-(pyridoxal phosphate)lysine mark. Arginine 387 is an L-aspartate binding site.

It belongs to the class-I pyridoxal-phosphate-dependent aminotransferase family. Homodimer. Pyridoxal 5'-phosphate serves as cofactor.

It localises to the cytoplasm. It catalyses the reaction L-aspartate + 2-oxoglutarate = oxaloacetate + L-glutamate. The catalysed reaction is L-cysteine + 2-oxoglutarate = 2-oxo-3-sulfanylpropanoate + L-glutamate. The enzyme catalyses (2S)-2-aminobutanoate + 2-oxoglutarate = 2-oxobutanoate + L-glutamate. It carries out the reaction 3-sulfino-L-alanine + 2-oxoglutarate = 3-sulfinopyruvate + L-glutamate. Biosynthesis of L-glutamate from L-aspartate or L-cysteine. Important regulator of levels of glutamate, the major excitatory neurotransmitter of the vertebrate central nervous system. Acts as a scavenger of glutamate in brain neuroprotection. The aspartate aminotransferase activity is involved in hepatic glucose synthesis during development and in adipocyte glyceroneogenesis. Using L-cysteine as substrate, regulates levels of mercaptopyruvate, an important source of hydrogen sulfide. Mercaptopyruvate is converted into H(2)S via the action of 3-mercaptopyruvate sulfurtransferase (3MST). Hydrogen sulfide is an important synaptic modulator and neuroprotectant in the brain. This chain is Aspartate aminotransferase, cytoplasmic, found in Macaca fascicularis (Crab-eating macaque).